The following is a 185-amino-acid chain: Potassium-transporting ATPase KdpC subunit (185 aa).

The helical transmembrane segment at 14 to 34 (ALSLLTGVAYPLALTGIAAVI) threads the bilayer.

It belongs to the KdpC family. In terms of assembly, the system is composed of three essential subunits: KdpA, KdpB and KdpC.

The protein localises to the cell inner membrane. In terms of biological role, part of the high-affinity ATP-driven potassium transport (or Kdp) system, which catalyzes the hydrolysis of ATP coupled with the electrogenic transport of potassium into the cytoplasm. This subunit acts as a catalytic chaperone that increases the ATP-binding affinity of the ATP-hydrolyzing subunit KdpB by the formation of a transient KdpB/KdpC/ATP ternary complex. The sequence is that of Potassium-transporting ATPase KdpC subunit from Cereibacter sphaeroides (strain ATCC 17023 / DSM 158 / JCM 6121 / CCUG 31486 / LMG 2827 / NBRC 12203 / NCIMB 8253 / ATH 2.4.1.) (Rhodobacter sphaeroides).